The primary structure comprises 466 residues: UDP-N-acetylmuramoylalanine--D-glutamate ligase (466 aa).

Residue 121–127 (GTNGKST) coordinates ATP.

This sequence belongs to the MurCDEF family.

It localises to the cytoplasm. The catalysed reaction is UDP-N-acetyl-alpha-D-muramoyl-L-alanine + D-glutamate + ATP = UDP-N-acetyl-alpha-D-muramoyl-L-alanyl-D-glutamate + ADP + phosphate + H(+). It participates in cell wall biogenesis; peptidoglycan biosynthesis. Its function is as follows. Cell wall formation. Catalyzes the addition of glutamate to the nucleotide precursor UDP-N-acetylmuramoyl-L-alanine (UMA). The chain is UDP-N-acetylmuramoylalanine--D-glutamate ligase from Nitrobacter winogradskyi (strain ATCC 25391 / DSM 10237 / CIP 104748 / NCIMB 11846 / Nb-255).